Consider the following 279-residue polypeptide: Thymidylate synthase (279 aa).

Position 133 to 134 (133 to 134 (RR)) interacts with dUMP. Residue C154 is the Nucleophile of the active site. DUMP is bound by residues 178-181 (RSND), N189, and 219-221 (HIY). A (6R)-5,10-methylene-5,6,7,8-tetrahydrofolate-binding site is contributed by D181. A278 contacts (6R)-5,10-methylene-5,6,7,8-tetrahydrofolate.

It belongs to the thymidylate synthase family. Bacterial-type ThyA subfamily. As to quaternary structure, homodimer.

It is found in the cytoplasm. The enzyme catalyses dUMP + (6R)-5,10-methylene-5,6,7,8-tetrahydrofolate = 7,8-dihydrofolate + dTMP. The protein operates within pyrimidine metabolism; dTTP biosynthesis. Functionally, catalyzes the reductive methylation of 2'-deoxyuridine-5'-monophosphate (dUMP) to 2'-deoxythymidine-5'-monophosphate (dTMP) while utilizing 5,10-methylenetetrahydrofolate (mTHF) as the methyl donor and reductant in the reaction, yielding dihydrofolate (DHF) as a by-product. This enzymatic reaction provides an intracellular de novo source of dTMP, an essential precursor for DNA biosynthesis. The chain is Thymidylate synthase from Streptococcus mutans serotype c (strain ATCC 700610 / UA159).